Consider the following 286-residue polypeptide: Elongation factor Ts (286 aa).

The interval 79–82 (TDFV) is involved in Mg(2+) ion dislocation from EF-Tu.

This sequence belongs to the EF-Ts family.

It is found in the cytoplasm. Its function is as follows. Associates with the EF-Tu.GDP complex and induces the exchange of GDP to GTP. It remains bound to the aminoacyl-tRNA.EF-Tu.GTP complex up to the GTP hydrolysis stage on the ribosome. The chain is Elongation factor Ts from Wolbachia pipientis wMel.